The primary structure comprises 303 residues: MRLFNWRRQAVLNAMPLVKPDQVRTPWHEFWRRFRRQHMAMTAALFVILLIVVAIFARWIAPYDAENYFDYDNLNNGPSLQHWFGVDSLGRDIFSRVLVGAQISLAAGVFAVFIGAAIGTLLGLLAGYYEGWWDRLSMRICDVLFAFPGILLAIAVVAVLGSGIANVIIAVAIFSIPAFARLVRGNTLVLKQQTFIESARSIGASDMTILLRHILPGTVSSIVVFFTMRIGTSIISAASLSFLGLGAQPPTPEWGAMLNEARADMVIAPHVAVFPALAIFLTVLAFNLLGDGLRDALDPKIKG.

Transmembrane regions (helical) follow at residues 40 to 60 (AMTA…ARWI), 105 to 125 (LAAG…LGLL), 144 to 164 (LFAF…GSGI), 165 to 185 (ANVI…LVRG), 222 to 242 (IVVF…SLSF), and 266 to 286 (VIAP…VLAF). One can recognise an ABC transmembrane type-1 domain in the interval 101–290 (AQISLAAGVF…LTVLAFNLLG (190 aa)).

The protein belongs to the binding-protein-dependent transport system permease family. The complex is composed of two ATP-binding proteins (GsiA), two transmembrane proteins (GsiC and GsiD) and a solute-binding protein (GsiB).

It is found in the cell inner membrane. Functionally, part of the ABC transporter complex GsiABCD involved in glutathione import. Probably responsible for the translocation of the substrate across the membrane. This chain is Glutathione transport system permease protein GsiD, found in Escherichia coli O1:K1 / APEC.